We begin with the raw amino-acid sequence, 485 residues long: UDP-N-acetylmuramoyl-L-alanyl-D-glutamate--2,6-diaminopimelate ligase (485 aa).

Ser-28 serves as a coordination point for UDP-N-acetyl-alpha-D-muramoyl-L-alanyl-D-glutamate. 108–114 provides a ligand contact to ATP; sequence GTNGKTS. Residues Asn-147, 148-149, Ser-175, and Arg-183 each bind UDP-N-acetyl-alpha-D-muramoyl-L-alanyl-D-glutamate; that span reads TT. Lys-215 is subject to N6-carboxylysine. Meso-2,6-diaminopimelate is bound by residues Arg-374, 398-401, Gly-449, and Glu-453; that span reads DNPR. A Meso-diaminopimelate recognition motif motif is present at residues 398-401; that stretch reads DNPR.

The protein belongs to the MurCDEF family. MurE subfamily. Mg(2+) serves as cofactor. Post-translationally, carboxylation is probably crucial for Mg(2+) binding and, consequently, for the gamma-phosphate positioning of ATP.

The protein resides in the cytoplasm. The catalysed reaction is UDP-N-acetyl-alpha-D-muramoyl-L-alanyl-D-glutamate + meso-2,6-diaminopimelate + ATP = UDP-N-acetyl-alpha-D-muramoyl-L-alanyl-gamma-D-glutamyl-meso-2,6-diaminopimelate + ADP + phosphate + H(+). Its pathway is cell wall biogenesis; peptidoglycan biosynthesis. Functionally, catalyzes the addition of meso-diaminopimelic acid to the nucleotide precursor UDP-N-acetylmuramoyl-L-alanyl-D-glutamate (UMAG) in the biosynthesis of bacterial cell-wall peptidoglycan. This chain is UDP-N-acetylmuramoyl-L-alanyl-D-glutamate--2,6-diaminopimelate ligase, found in Fusobacterium nucleatum subsp. nucleatum (strain ATCC 25586 / DSM 15643 / BCRC 10681 / CIP 101130 / JCM 8532 / KCTC 2640 / LMG 13131 / VPI 4355).